Reading from the N-terminus, the 391-residue chain is Phosphoglycerate kinase (391 aa).

Residues 21-23, Arg-36, 59-62, Arg-113, and Arg-146 contribute to the substrate site; these read DLN and HLGR. ATP contacts are provided by residues Lys-197, Glu-319, and 345-348; that span reads GGDT.

Belongs to the phosphoglycerate kinase family. As to quaternary structure, monomer.

It localises to the cytoplasm. The enzyme catalyses (2R)-3-phosphoglycerate + ATP = (2R)-3-phospho-glyceroyl phosphate + ADP. It participates in carbohydrate degradation; glycolysis; pyruvate from D-glyceraldehyde 3-phosphate: step 2/5. This Shewanella sp. (strain MR-7) protein is Phosphoglycerate kinase.